The primary structure comprises 100 residues: Small ribosomal subunit protein bS18c (100 aa).

The protein belongs to the bacterial ribosomal protein bS18 family. In terms of assembly, part of the 30S ribosomal subunit.

The protein resides in the plastid. It localises to the chloroplast. This Pleurastrum terricola (Filamentous green alga) protein is Small ribosomal subunit protein bS18c.